The following is a 346-amino-acid chain: uncharacterized protein (346 aa).

The protein belongs to the IIV-6 359L family.

This is an uncharacterized protein from Invertebrate iridescent virus 6 (IIV-6).